The following is a 393-amino-acid chain: MNKKAYFGEFGGSFVSELLVPALRELEQAFDACLKDEKFQKEYFRLLKDFVGRPSPLTLCQNIVSNPKVKLYLKREDLIHGGAHKTNQALGQALLAKKMGKTRIIAETGAGQHGVATAIACALLNLKCVVFMGSKDIKRQEMNVFRMHLLGAEVREVNSGSATLKDAVNEALRDWASSYKDTHYLLGTAAGPHPYPTMVKTFQKMIGDEVKSQILEKENRLPDYVIACVGGGSNAIGIFSAFLNDKEVKLIGVEPAGLGLETNKHGATLNKGRVGILHGNKTYLLQDDEGQIAESHSISAGLDYPGVGPEHSYLKESGRAVYESASDAEALEAFKLLCQKEGIIPALESSHALAYALKLAQKCEEESIIVVNLSGRGDKDLSTVYNALKGGLK.

Residue lysine 85 is modified to N6-(pyridoxal phosphate)lysine.

This sequence belongs to the TrpB family. As to quaternary structure, tetramer of two alpha and two beta chains. Pyridoxal 5'-phosphate serves as cofactor.

The catalysed reaction is (1S,2R)-1-C-(indol-3-yl)glycerol 3-phosphate + L-serine = D-glyceraldehyde 3-phosphate + L-tryptophan + H2O. It functions in the pathway amino-acid biosynthesis; L-tryptophan biosynthesis; L-tryptophan from chorismate: step 5/5. In terms of biological role, the beta subunit is responsible for the synthesis of L-tryptophan from indole and L-serine. This is Tryptophan synthase beta chain (trpB) from Helicobacter pylori (strain ATCC 700392 / 26695) (Campylobacter pylori).